Reading from the N-terminus, the 601-residue chain is Sulfite reductase [NADPH] flavoprotein alpha-component (601 aa).

The Flavodoxin-like domain maps to 64-202 (ITLISASQTG…AAAEWRARIV (139 aa)). Residues 70 to 75 (SQTGNA), 117 to 120 (STQG), and 153 to 162 (LGDTSYEFFC) contribute to the FMN site. Residues 236-450 (EEPLVASLSV…IEHNDNFRLP (215 aa)) form the FAD-binding FR-type domain. Residues T324, A358, 388-391 (RLYS), 406-408 (TVG), and 421-424 (GGAS) each bind FAD. Residues 521–522 (SR), 527–531 (KIYVQ), and D563 each bind NADP(+). Y601 is an FAD binding site.

It belongs to the NADPH-dependent sulphite reductase flavoprotein subunit CysJ family. In the N-terminal section; belongs to the flavodoxin family. This sequence in the C-terminal section; belongs to the flavoprotein pyridine nucleotide cytochrome reductase family. In terms of assembly, alpha(8)-beta(8). The alpha component is a flavoprotein, the beta component is a hemoprotein. The cofactor is FAD. It depends on FMN as a cofactor.

It catalyses the reaction hydrogen sulfide + 3 NADP(+) + 3 H2O = sulfite + 3 NADPH + 4 H(+). The protein operates within sulfur metabolism; hydrogen sulfide biosynthesis; hydrogen sulfide from sulfite (NADPH route): step 1/1. Component of the sulfite reductase complex that catalyzes the 6-electron reduction of sulfite to sulfide. This is one of several activities required for the biosynthesis of L-cysteine from sulfate. The flavoprotein component catalyzes the electron flow from NADPH -&gt; FAD -&gt; FMN to the hemoprotein component. The chain is Sulfite reductase [NADPH] flavoprotein alpha-component from Enterobacter sp. (strain 638).